Reading from the N-terminus, the 680-residue chain is DNA ligase (680 aa).

Residues 38 to 42 (DAEYD), 87 to 88 (SL), and Glu-119 each bind NAD(+). The active-site N6-AMP-lysine intermediate is Lys-121. NAD(+)-binding residues include Arg-142, Glu-179, Lys-296, and Lys-320. Residues Cys-414, Cys-417, Cys-432, and Cys-438 each contribute to the Zn(2+) site. The 84-residue stretch at 597-680 (IEDLPLKGLT…DLLRKHGRLE (84 aa)) folds into the BRCT domain.

The protein belongs to the NAD-dependent DNA ligase family. LigA subfamily. It depends on Mg(2+) as a cofactor. Requires Mn(2+) as cofactor.

It catalyses the reaction NAD(+) + (deoxyribonucleotide)n-3'-hydroxyl + 5'-phospho-(deoxyribonucleotide)m = (deoxyribonucleotide)n+m + AMP + beta-nicotinamide D-nucleotide.. In terms of biological role, DNA ligase that catalyzes the formation of phosphodiester linkages between 5'-phosphoryl and 3'-hydroxyl groups in double-stranded DNA using NAD as a coenzyme and as the energy source for the reaction. It is essential for DNA replication and repair of damaged DNA. This is DNA ligase from Cellvibrio japonicus (strain Ueda107) (Pseudomonas fluorescens subsp. cellulosa).